A 450-amino-acid polypeptide reads, in one-letter code: Regulator of sigma-E protease RseP (450 aa).

A helical transmembrane segment spans residues 1–21 (MLSFLWDLASFIVALGVLITV). A Zn(2+)-binding site is contributed by His-22. At 22-103 (HEFGHFWVAR…VGQRAAIIAA (82 aa)) the chain is on the periplasmic side. Glu-23 is a catalytic residue. His-26 is a Zn(2+) binding site. A helical transmembrane segment spans residues 104–124 (GPVANFIFAIFAYWLVFIIGV). At 125-375 (PGVRPVVGEI…KGAGMTAELG (251 aa)) the chain is on the cytoplasmic side. PDZ domains follow at residues 127-220 (VRPV…PRGP) and 222-309 (IEPV…PKVI). Residues 376–396 (VVYYLPFLALISVNLGIINLF) form a helical membrane-spanning segment. Over 397–429 (PLPVLDGGHLLFLAIEKIKGGPVSERVQDFCYR) the chain is Periplasmic. Residues 430–450 (IGSILLVLLMGLALFNDFSRL) traverse the membrane as a helical segment.

It belongs to the peptidase M50B family. Interacts with RseA; the third transmembrane domain can be cross-linked to the transmembrane domain of RseA. Zn(2+) serves as cofactor.

Its subcellular location is the cell inner membrane. Its activity is regulated as follows. Inhibited by Zn(2+) chelator 1,10-phenanthroline. Functionally, a site-2 regulated intramembrane protease (S2P) that cleaves the peptide bond between 'Ala-108' and 'Cys-109' in the transmembrane region of RseA. Part of a regulated intramembrane proteolysis (RIP) cascade. Acts on DegS-cleaved RseA to release the cytoplasmic domain of RseA, residue 'Val-148' of RseA may be required for this. This provides the cell with sigma-E (RpoE) activity through the proteolysis of RseA. Can also cleave sequences in transmembrane regions of other proteins (such as LacY) as well as liberated signal peptides of beta-lactamase, OmpF, LivK, SecM, PhoA, LivJ, OmpC, Lpp and TorA, probably within the membrane. Cleaves FecR within its transmembrane region to release an N-terminal cytoplasmic fragment which binds to sigma factor FecI, allowing it to activate transcription of the fecABCDE operon which mediates ferric citrate transport. This Escherichia coli (strain K12) protein is Regulator of sigma-E protease RseP (rseP).